A 258-amino-acid chain; its full sequence is Small ribosomal subunit protein uS2 (258 aa).

Residues 226-258 are disordered; that stretch reads AQNKDVEPVADKDEKPEAAPVDEAETATETTGE. Positions 229-242 are enriched in basic and acidic residues; the sequence is KDVEPVADKDEKPE. Residues 245-258 show a composition bias toward acidic residues; it reads PVDEAETATETTGE.

This sequence belongs to the universal ribosomal protein uS2 family.

In Solidesulfovibrio magneticus (strain ATCC 700980 / DSM 13731 / RS-1) (Desulfovibrio magneticus), this protein is Small ribosomal subunit protein uS2.